A 390-amino-acid chain; its full sequence is Cell division protein FtsZ (390 aa).

GTP is bound by residues 20–24, 106–108, glutamate 137, arginine 141, and aspartate 184; these read GGGNN and GTG.

Belongs to the FtsZ family. As to quaternary structure, homodimer. Polymerizes to form a dynamic ring structure in a strictly GTP-dependent manner. Interacts directly with several other division proteins.

Its subcellular location is the cytoplasm. Essential cell division protein that forms a contractile ring structure (Z ring) at the future cell division site. The regulation of the ring assembly controls the timing and the location of cell division. One of the functions of the FtsZ ring is to recruit other cell division proteins to the septum to produce a new cell wall between the dividing cells. Binds GTP and shows GTPase activity. This is Cell division protein FtsZ from Mycoplasmopsis pulmonis (strain UAB CTIP) (Mycoplasma pulmonis).